The primary structure comprises 270 residues: Putative pyruvate, phosphate dikinase regulatory protein (270 aa).

Residue 149-156 (GVSRTSKT) coordinates ADP.

The protein belongs to the pyruvate, phosphate/water dikinase regulatory protein family. PDRP subfamily.

It catalyses the reaction N(tele)-phospho-L-histidyl/L-threonyl-[pyruvate, phosphate dikinase] + ADP = N(tele)-phospho-L-histidyl/O-phospho-L-threonyl-[pyruvate, phosphate dikinase] + AMP + H(+). The enzyme catalyses N(tele)-phospho-L-histidyl/O-phospho-L-threonyl-[pyruvate, phosphate dikinase] + phosphate + H(+) = N(tele)-phospho-L-histidyl/L-threonyl-[pyruvate, phosphate dikinase] + diphosphate. Its function is as follows. Bifunctional serine/threonine kinase and phosphorylase involved in the regulation of the pyruvate, phosphate dikinase (PPDK) by catalyzing its phosphorylation/dephosphorylation. In Thermoanaerobacter pseudethanolicus (strain ATCC 33223 / 39E) (Clostridium thermohydrosulfuricum), this protein is Putative pyruvate, phosphate dikinase regulatory protein.